The primary structure comprises 167 residues: Piercer of microtubule wall 1 protein (167 aa).

A disordered region spans residues 1 to 54 (MSEEKPQQSAEEPEPGEPKAKPAPEEPEPGEPKAKPAPEEPEPGEPKAKPAPEK). The span at 16–54 (GEPKAKPAPEEPEPGEPKAKPAPEEPEPGEPKAKPAPEK) shows a compositional bias: basic and acidic residues.

Belongs to the PIERCE1 family. Microtubule inner protein component of sperm flagellar doublet microtubules. Interacts with CFAP53, ODAD1 and ODAD3; the interactions link the outer dynein arms docking complex (ODA-DC) to the internal microtubule inner proteins (MIP) in cilium axoneme. As to expression, expressed in brain, lung, kidney and testis.

Its subcellular location is the cytoplasm. The protein resides in the cytoskeleton. The protein localises to the cilium axoneme. It is found in the flagellum axoneme. In terms of biological role, microtubule inner protein involved in the attachment of outer dynein arms (ODAs) to dynein-decorated doublet microtubules (DMTs) in cilia axoneme. Functions at the initial step of left-right asymmetry specification of the visceral organs. The chain is Piercer of microtubule wall 1 protein from Mus musculus (Mouse).